The sequence spans 155 residues: Protein-export protein SecB (155 aa).

Belongs to the SecB family. In terms of assembly, homotetramer, a dimer of dimers. One homotetramer interacts with 1 SecA dimer.

The protein localises to the cytoplasm. One of the proteins required for the normal export of preproteins out of the cell cytoplasm. It is a molecular chaperone that binds to a subset of precursor proteins, maintaining them in a translocation-competent state. It also specifically binds to its receptor SecA. The sequence is that of Protein-export protein SecB from Psychromonas ingrahamii (strain DSM 17664 / CCUG 51855 / 37).